The chain runs to 419 residues: Esterase FrsA (419 aa).

This sequence belongs to the FrsA family.

The enzyme catalyses a carboxylic ester + H2O = an alcohol + a carboxylate + H(+). In terms of biological role, catalyzes the hydrolysis of esters. This Photobacterium profundum (strain SS9) protein is Esterase FrsA.